The following is a 224-amino-acid chain: Large ribosomal subunit protein uL1c (224 aa).

This sequence belongs to the universal ribosomal protein uL1 family. As to quaternary structure, part of the 50S ribosomal subunit.

It is found in the plastid. Its subcellular location is the chloroplast. In terms of biological role, binds directly to 23S rRNA. Might be involved in E site tRNA release (Potential). In Cyanidioschyzon merolae (strain NIES-3377 / 10D) (Unicellular red alga), this protein is Large ribosomal subunit protein uL1c (rpl1).